We begin with the raw amino-acid sequence, 688 residues long: Putative proline--tRNA ligase YHR020W (688 aa).

At Ser149 the chain carries Phosphoserine. Phosphothreonine is present on Thr170. Positions 631–650 (ESSAKKDDGEEFEEDDKAPS) are disordered. At Ser655 the chain carries Phosphoserine.

Belongs to the class-II aminoacyl-tRNA synthetase family.

The enzyme catalyses tRNA(Pro) + L-proline + ATP = L-prolyl-tRNA(Pro) + AMP + diphosphate. The chain is Putative proline--tRNA ligase YHR020W from Saccharomyces cerevisiae (strain ATCC 204508 / S288c) (Baker's yeast).